A 178-amino-acid polypeptide reads, in one-letter code: Phosphopantetheine adenylyltransferase (178 aa).

Threonine 17 is a substrate binding site. ATP contacts are provided by residues 17 to 18 (TF) and histidine 25. Residues lysine 49, leucine 86, and arginine 100 each contribute to the substrate site. Residues 101–103 (GLR), glutamate 111, and 136–142 (LQPVASR) contribute to the ATP site.

The protein belongs to the bacterial CoaD family. As to quaternary structure, homohexamer. Mg(2+) serves as cofactor.

It localises to the cytoplasm. It carries out the reaction (R)-4'-phosphopantetheine + ATP + H(+) = 3'-dephospho-CoA + diphosphate. It participates in cofactor biosynthesis; coenzyme A biosynthesis; CoA from (R)-pantothenate: step 4/5. Functionally, reversibly transfers an adenylyl group from ATP to 4'-phosphopantetheine, yielding dephospho-CoA (dPCoA) and pyrophosphate. The protein is Phosphopantetheine adenylyltransferase of Zymomonas mobilis subsp. mobilis (strain ATCC 31821 / ZM4 / CP4).